We begin with the raw amino-acid sequence, 410 residues long: Arginine deiminase (410 aa).

The active-site Amidino-cysteine intermediate is Cys400.

The protein belongs to the arginine deiminase family.

Its subcellular location is the cytoplasm. It catalyses the reaction L-arginine + H2O = L-citrulline + NH4(+). Its pathway is amino-acid degradation; L-arginine degradation via ADI pathway; carbamoyl phosphate from L-arginine: step 1/2. In Bacillus cereus (strain G9842), this protein is Arginine deiminase.